The primary structure comprises 1052 residues: Membrane-bound transcription factor site-1 protease (1052 aa).

The signal sequence occupies residues 1-17; that stretch reads MKLINIWLLLLVVLLCG. The propeptide occupies 18–186; it reads KKHLGDRLGK…TGRHSSRRLL (169 aa). An N-linked (GlcNAc...) asparagine glycan is attached at Asn148. A Phosphoserine modification is found at Ser168. Residues 187 to 999 are Lumenal-facing; sequence RAIPRQVAQT…MPGRYNQEVG (813 aa). Positions 190 to 472 constitute a Peptidase S8 domain; sequence PRQVAQTLQA…HGKLDLLRAY (283 aa). Asp218 acts as the Charge relay system in catalysis. An N-linked (GlcNAc...) asparagine glycan is attached at Asn236. His249 serves as the catalytic Charge relay system. Asn305 carries an N-linked (GlcNAc...) asparagine glycan. The active-site Charge relay system is Ser414. Asn515 and Asn728 each carry an N-linked (GlcNAc...) asparagine glycan. The span at 877 to 887 shows a compositional bias: polar residues; the sequence is PSLSHSGNRQR. The interval 877–900 is disordered; sequence PSLSHSGNRQRPPSGAGLAPPERM. Asn939 carries an N-linked (GlcNAc...) asparagine glycan. Residues 1000–1022 traverse the membrane as a helical segment; sequence QTIPVFAFLGAMVALAFFVVQIS. The Cytoplasmic portion of the chain corresponds to 1023-1052; sequence KAKSRPKRRRPRAKRPQLTQQTHPPRTPSV. Positions 1025–1037 are enriched in basic residues; it reads KSRPKRRRPRAKR. The segment at 1025 to 1052 is disordered; the sequence is KSRPKRRRPRAKRPQLTQQTHPPRTPSV.

The protein belongs to the peptidase S8 family. The cofactor is Ca(2+). The 148 kDa zymogen is processed progressively into two membrane-bound 120 and 106 kDa forms in the endoplasmic reticulum, and late into a secreted 98 kDa form. The propeptide is autocatalytically removed through an intramolecular cleavage after Leu-186. Further cleavage generates 14, 10, and 8 kDa intermediates.

It localises to the endoplasmic reticulum membrane. Its subcellular location is the golgi apparatus membrane. It carries out the reaction Processes precursors containing basic and hydrophobic/aliphatic residues at P4 and P2, respectively, with a relatively relaxed acceptance of amino acids at P1 and P3.. With respect to regulation, inhibited by divalent copper and zinc ions, but not by nickel or cobalt. Inhibited by its prosegment, but not smaller fragments. Inhibited by 4-(2-aminoethyl)benzenesulfonyl fluoride (AEBSF), a serine protease inhibitor. In terms of biological role, serine protease that cleaves after hydrophobic or small residues, provided that Arg or Lys is in position P4: known substrates include SREBF1/SREBP1, SREBF2/SREBP2, BDNF, GNPTAB, ATF6, ATF6B and FAM20C. Cleaves substrates after Arg-Ser-Val-Leu (SREBP2), Arg-His-Leu-Leu (ATF6), Arg-Gly-Leu-Thr (BDNF) and its own propeptide after Arg-Arg-Leu-Leu. Catalyzes the first step in the proteolytic activation of the sterol regulatory element-binding proteins (SREBPs) SREBF1/SREBP1 and SREBF2/SREBP2. Also mediates the first step in the proteolytic activation of the cyclic AMP-dependent transcription factor ATF-6 (ATF6 and ATF6B). Mediates the protein cleavage of GNPTAB into subunit alpha and beta, thereby participating in biogenesis of lysosomes. Cleaves the propeptide from FAM20C which is required for FAM20C secretion from the Golgi apparatus membrane and for enhancement of FAM20C kinase activity, promoting osteoblast differentiation and biomineralization. Involved in the regulation of M6P-dependent Golgi-to-lysosome trafficking of lysosomal enzymes. It is required for the activation of CREB3L2/BBF2H7, a transcriptional activator of MIA3/TANGO and other genes controlling mega vesicle formation. Therefore, it plays a key role in the regulation of mega vesicle-mediated collagen trafficking. In astrocytes and osteoblasts, upon DNA damage and ER stress, mediates the first step of the regulated intramembrane proteolytic activation of the transcription factor CREB3L1, leading to the inhibition of cell-cycle progression. This is Membrane-bound transcription factor site-1 protease from Cricetulus griseus (Chinese hamster).